An 88-amino-acid polypeptide reads, in one-letter code: MRATRVLLNSAKKSSIAANLPIEMYPLFAAMGVAVASGCFFTYRHFAHDKELRLWKNANLSNLDNVLNAEVHKNEAGNKDEKKEENKD.

The chain crosses the membrane as a helical span at residues 25-47 (YPLFAAMGVAVASGCFFTYRHFA).

It belongs to the UPF0495 family.

The protein localises to the membrane. This chain is UPF0495 protein DEHA2C16280g, found in Debaryomyces hansenii (strain ATCC 36239 / CBS 767 / BCRC 21394 / JCM 1990 / NBRC 0083 / IGC 2968) (Yeast).